The following is a 184-amino-acid chain: Vacuolar protein sorting-associated protein 68 (184 aa).

N-acetylmethionine is present on M1. S8 is modified (phosphoserine). The chain crosses the membrane as a helical span at residues 26 to 46 (GVYLSGALYALGFWIFLDAVL). An N-linked (GlcNAc...) asparagine glycan is attached at N52. 3 helical membrane-spanning segments follow: residues 56–76 (VHVTFIDWIPFLCSTLGTLIV), 115–135 (LFFGFALLAGGLSGSIVVLII), and 150–170 (MGVNNVLGNVCILLSCVVLWI).

It belongs to the UPF0220 family.

It localises to the vacuole membrane. The protein localises to the mitochondrion. Its function is as follows. Involved in vacuolar protein sorting. In Saccharomyces cerevisiae (strain ATCC 204508 / S288c) (Baker's yeast), this protein is Vacuolar protein sorting-associated protein 68 (VPS68).